The sequence spans 234 residues: Segregation and condensation protein A (234 aa).

It belongs to the ScpA family. Component of a cohesin-like complex composed of ScpA, ScpB and the Smc homodimer, in which ScpA and ScpB bind to the head domain of Smc. The presence of the three proteins is required for the association of the complex with DNA.

The protein resides in the cytoplasm. Functionally, participates in chromosomal partition during cell division. May act via the formation of a condensin-like complex containing Smc and ScpB that pull DNA away from mid-cell into both cell halves. This is Segregation and condensation protein A from Streptococcus pyogenes serotype M12 (strain MGAS2096).